A 373-amino-acid polypeptide reads, in one-letter code: SWI/SNF-related matrix-associated actin-dependent regulator of chromatin subfamily B member 1 (373 aa).

Residues 1-101 (MALSKAFGQK…DEKYKAVSIS (101 aa)) are DNA-binding.

Belongs to the SNF5 family. In terms of assembly, component of the multiprotein chromatin-remodeling complexes SWI/SNF. Component of neural progenitors-specific chromatin remodeling complex (npBAF complex) and the neuron-specific chromatin remodeling complex (nBAF complex). Component of the BAF (SWI/SNF) chromatin remodeling complex. Component of the SWI/SNF-B (PBAF) chromatin remodeling complex. Binds to double-stranded DNA.

It is found in the nucleus. Functionally, involved in chromatin-remodeling. Core component of the BAF (SWI/SNF) complex. This ATP-dependent chromatin-remodeling complex plays important roles in cell proliferation and differentiation, in cellular antiviral activities and inhibition of tumor formation. Belongs to the neural progenitors-specific chromatin remodeling complex (npBAF complex) and the neuron-specific chromatin remodeling complex (nBAF complex) and may play a role in neural development. The sequence is that of SWI/SNF-related matrix-associated actin-dependent regulator of chromatin subfamily B member 1 (smarcb1) from Dichotomyctere fluviatilis (Green pufferfish).